Consider the following 202-residue polypeptide: DNA polymerase III subunit epsilon (202 aa).

2 residues coordinate a divalent metal cation: Asp-23 and Glu-25. Positions 23 and 25 each coordinate substrate. His-162 (proton acceptor) is an active-site residue. Residue Asp-167 participates in a divalent metal cation binding. Residue Asp-167 coordinates substrate.

As to quaternary structure, DNA polymerase III contains a core (composed of alpha, epsilon and theta chains) that associates with a tau subunit. This core dimerizes to form the POLIII' complex. PolIII' associates with the gamma complex (composed of gamma, delta, delta', psi and chi chains) and with the beta chain to form the complete DNA polymerase III complex. The cofactor is Mg(2+). Mn(2+) serves as cofactor.

The enzyme catalyses DNA(n) + a 2'-deoxyribonucleoside 5'-triphosphate = DNA(n+1) + diphosphate. DNA polymerase III is a complex, multichain enzyme responsible for most of the replicative synthesis in bacteria. The epsilon subunit contain the editing function and is a proofreading 3'-5' exonuclease. This chain is DNA polymerase III subunit epsilon (dnaQ), found in Aquifex aeolicus (strain VF5).